Here is a 340-residue protein sequence, read N- to C-terminus: DNA-directed RNA polymerase subunit alpha (340 aa).

An alpha N-terminal domain (alpha-NTD) region spans residues 1–233 (MYRNWRDLIS…EQLSIFINFD (233 aa)). The alpha C-terminal domain (alpha-CTD) stretch occupies residues 251 to 340 (VNENLYRSVD…RIRGERKDEE (90 aa)).

Belongs to the RNA polymerase alpha chain family. In terms of assembly, homodimer. The RNAP catalytic core consists of 2 alpha, 1 beta, 1 beta' and 1 omega subunit. When a sigma factor is associated with the core the holoenzyme is formed, which can initiate transcription.

The catalysed reaction is RNA(n) + a ribonucleoside 5'-triphosphate = RNA(n+1) + diphosphate. In terms of biological role, DNA-dependent RNA polymerase catalyzes the transcription of DNA into RNA using the four ribonucleoside triphosphates as substrates. The sequence is that of DNA-directed RNA polymerase subunit alpha from Geobacter metallireducens (strain ATCC 53774 / DSM 7210 / GS-15).